The chain runs to 341 residues: Adenylosuccinate synthetase (341 aa).

Residues 12 to 18 (GDEGKGK) and 42 to 44 (GHS) each bind GTP. Catalysis depends on Asp13, which acts as the Proton acceptor. Residues Asp13 and Gly42 each contribute to the Mg(2+) site. IMP contacts are provided by residues 13-16 (DEGK), 40-43 (NAGH), Thr127, Arg141, Gln179, Thr194, and Arg256. The active-site Proton donor is His43. 252 to 258 (VVTGRKR) serves as a coordination point for substrate. Residues Arg258, 284–286 (CID), and 324–326 (STG) each bind GTP.

This sequence belongs to the adenylosuccinate synthetase family. Homodimer. Mg(2+) is required as a cofactor.

It is found in the cytoplasm. It catalyses the reaction IMP + L-aspartate + GTP = N(6)-(1,2-dicarboxyethyl)-AMP + GDP + phosphate + 2 H(+). Its pathway is purine metabolism; AMP biosynthesis via de novo pathway; AMP from IMP: step 1/2. Its function is as follows. Plays an important role in the de novo pathway of purine nucleotide biosynthesis. Catalyzes the first committed step in the biosynthesis of AMP from IMP. The polypeptide is Adenylosuccinate synthetase (Methanosphaera stadtmanae (strain ATCC 43021 / DSM 3091 / JCM 11832 / MCB-3)).